A 324-amino-acid chain; its full sequence is Glyoxylate/hydroxypyruvate reductase B (324 aa).

Residues Arg-237 and Glu-266 contribute to the active site. The Proton donor role is filled by His-285.

Belongs to the D-isomer specific 2-hydroxyacid dehydrogenase family. GhrB subfamily. As to quaternary structure, homodimer.

It localises to the cytoplasm. It catalyses the reaction glycolate + NADP(+) = glyoxylate + NADPH + H(+). The enzyme catalyses (R)-glycerate + NAD(+) = 3-hydroxypyruvate + NADH + H(+). It carries out the reaction (R)-glycerate + NADP(+) = 3-hydroxypyruvate + NADPH + H(+). Functionally, catalyzes the NADPH-dependent reduction of glyoxylate and hydroxypyruvate into glycolate and glycerate, respectively. In Salmonella schwarzengrund (strain CVM19633), this protein is Glyoxylate/hydroxypyruvate reductase B.